We begin with the raw amino-acid sequence, 241 residues long: C-type lectin domain family 9 member A (241 aa).

At 1-34 the chain is on the cytoplasmic side; that stretch reads MHEEEIYTSLQWDIPTSEASQKCPSLSKCPGTWC. Residues 5–10 carry the ITAM-like motif; it reads EIYTSL. Residues 35–55 form a helical; Signal-anchor for type II membrane protein membrane-spanning segment; sequence IVTVISCVVCVGLLAASIFLG. The Extracellular portion of the chain corresponds to 56 to 241; the sequence is IKFSQVSSLV…CEKKAFGSCI (186 aa). Residues asparagine 81 and asparagine 88 are each glycosylated (N-linked (GlcNAc...) asparagine). The cysteines at positions 113 and 124 are disulfide-linked. In terms of domain architecture, C-type lectin spans 120-233; it reads NGKSCYYAFD…CSNWKYFICE (114 aa). Asparagine 135, asparagine 161, and asparagine 223 each carry an N-linked (GlcNAc...) asparagine glycan. Intrachain disulfides connect cysteine 141–cysteine 232 and cysteine 211–cysteine 224.

Homodimer. Post-translationally, N-glycosylated. In terms of tissue distribution, high expression in the spleen, moderate to low levels in several other tissues and cell types, but no detectable expression in skin dendritic cells or CD4(+) T-cells.

It is found in the membrane. In terms of biological role, functions as an endocytic receptor on a small subset of myeloid cells specialized for the uptake and processing of material from dead cells. Recognizes filamentous form of actin in association with particular actin-binding domains of cytoskeletal proteins, including spectrin, exposed when cell membranes are damaged, and mediate the cross-presentation of dead-cell associated antigens in a Syk-dependent manner. The protein is C-type lectin domain family 9 member A (Clec9a) of Rattus norvegicus (Rat).